We begin with the raw amino-acid sequence, 1022 residues long: MVSPLCDSQLLYHRPSISPTASQFVIADGIILRQNRLLSSSSFWGTKFGNTVKLGVSGCSSCSRKRSTSVNASLGGLLSGIFKGSDNGESTRQQYASIVASVNRLETEISALSDSELRERTDALKQRAQKGESMDSLLPEAFAVVREASKRVLGLRPFDVQLIGGMVLHKGEIAEMRTGEGKTLVAILPAYLNALSGKGVHVVTVNDYLARRDCEWVGQVPRFLGLKVGLIQQNMTPEQRKENYLCDITYVTNSELGFDYLRDNLATSVEELVLRDFNYCVIDEVDSILIDEARTPLIISGPAEKPSDQYYKAAKIASAFERDIHYTVDEKQKTVLLTEQGYEDAEEILDVKDLYDPREQWASYVLNAIKAKELFLRDVNYIIRAKEVLIVDEFTGRVMQGRRWSDGLHQAVEAKEGLPIQNESITLASISYQNFFLQFPKLCGMTGTASTESAEFESIYKLKVTIVPTNKPMIRKDESDVVFKAVNGKWRAVVVEISRMHKTGRAVLVGTTSVEQSDELSQLLREAGITHEVLNAKPENVEREAEIVAQSGRLGAVTIATNMAGRGTDIILGGNAEFMARLKLREILMPRVVKPTDGVFVSVKKAPPKRTWKVNEKLFPCKLSNEKAKLAEEAVQSAVEAWGQKSLTELEAEERLSYSCEKGPVQDEVIGKLRTAFLAIAKEYKGYTDEERKKVVEAGGLHVVGTERHESRRIDNQLRGRSGRQGDPGSSRFFLSLEDNIFRIFGGDRIQGMMRAFRVEDLPIESKMLTKALDEAQRKVENYFFDIRKQLFEFDEVLNSQRDRVYTERRRALVSDSLEPLIIEYAELTMDDILEANIGPDTPKESWDFEKLIAKVQQYCYLLNDLTPDLLKSEGSSYEGLQDYLRARGRDAYLQKREIVEKQSPGLMKDAERFLILSNIDRLWKEHLQALKFVQQAVGLRGYAQRDPLIEYKLEGYNLFLEMMAQIRRNVIYSIYQFQPVRVKKDEEKKSQNGKPSKQVDNASEKPKQVGVTDEPSSIASA.

The transit peptide at 1–72 (MVSPLCDSQL…SRKRSTSVNA (72 aa)) directs the protein to the chloroplast. At Ser-73 the chain carries N-acetylserine. 176-183 (MRTGEGKT) is a binding site for ATP. The disordered stretch occupies residues 985 to 1022 (KDEEKKSQNGKPSKQVDNASEKPKQVGVTDEPSSIASA). Over residues 993–1002 (NGKPSKQVDN) the composition is skewed to polar residues.

Belongs to the SecA family. Part of the Sec protein translocation apparatus. Interacts probably with SCY1. As to expression, expressed in green tissues, including cotyledons, rosette and cauline leaves, and sepals. Also detected at the base and the tip of the trichome.

It is found in the plastid. The protein localises to the chloroplast stroma. The protein resides in the chloroplast thylakoid membrane. It carries out the reaction ATP + H2O + chloroplast-proteinSide 1 = ADP + phosphate + chloroplast-proteinSide 2.. In terms of biological role, has a central role in coupling the hydrolysis of ATP to the transfer of proteins across the thylakoid membrane. Involved in photosynthetic acclimation and required for chloroplast biogenesis. The sequence is that of Protein translocase subunit SECA1, chloroplastic from Arabidopsis thaliana (Mouse-ear cress).